The sequence spans 135 residues: Large ribosomal subunit protein uL16c (135 aa).

Belongs to the universal ribosomal protein uL16 family. As to quaternary structure, part of the 50S ribosomal subunit.

Its subcellular location is the plastid. The protein localises to the chloroplast. This is Large ribosomal subunit protein uL16c from Piper cenocladum (Ant piper).